The chain runs to 426 residues: Glutamate-1-semialdehyde 2,1-aminomutase (426 aa).

Lysine 265 bears the N6-(pyridoxal phosphate)lysine mark.

Belongs to the class-III pyridoxal-phosphate-dependent aminotransferase family. HemL subfamily. Homodimer. It depends on pyridoxal 5'-phosphate as a cofactor.

Its subcellular location is the cytoplasm. The catalysed reaction is (S)-4-amino-5-oxopentanoate = 5-aminolevulinate. It participates in porphyrin-containing compound metabolism; protoporphyrin-IX biosynthesis; 5-aminolevulinate from L-glutamyl-tRNA(Glu): step 2/2. This is Glutamate-1-semialdehyde 2,1-aminomutase from Escherichia coli O127:H6 (strain E2348/69 / EPEC).